The primary structure comprises 1253 residues: Guanine nucleotide exchange factor SDC25 (1253 aa).

In terms of domain architecture, SH3 spans 26–98; the sequence is QPIDVVECTY…PPSFTRSILN (73 aa). The disordered stretch occupies residues 624–649; sequence LNLDNAKDKKNGSQNTDIQEEEDEYE. The N-terminal Ras-GEF domain maps to 782 to 914; that stretch reads GPIVRIKGGS…ELLKEVNQKF (133 aa). The region spanning 952–1199 is the Ras-GEF domain; that stretch reads VDPVLFATQL…QYQLSLIIEP (248 aa). The interval 1202 to 1253 is disordered; sequence RKKVVPNSNSNNKSQEKSRDDQTDEGKTSTKKDRFPKFQLHKTKKKAPKVSK. The segment covering 1215–1237 has biased composition (basic and acidic residues); the sequence is SQEKSRDDQTDEGKTSTKKDRFP. Over residues 1240–1253 the composition is skewed to basic residues; the sequence is QLHKTKKKAPKVSK.

Its function is as follows. Promotes the exchange of Ras-bound GDP by GTP. In Saccharomyces cerevisiae (Baker's yeast), this protein is Guanine nucleotide exchange factor SDC25 (SDC25).